We begin with the raw amino-acid sequence, 1910 residues long: MWVAKWLTGLLYHLSLFITRSWEVDFHPRQEALVRTLTSYEVVIPERVNEFGEVFPQSHHFSRQKRSSEALEPMPFRTHYRFTAYGQLFQLNLTADASFLAAGYTEVHLGTPERGAWESDAGPSDLRHCFYRGQVNSQEDYKAVVSLCGGLTGTFKGQNGEYFLEPIMKADGNEYEDGHNKPHLIYRQDLNNSFLQTLKYCSVSESQIKETSLPFHTYSNMNEDLNVMKERVLGHTSKNVPLKDERRHSRKKRLISYPRYIEIMVTADAKVVSAHGSNLQNYILTLMSIVATIYKDPSIGNLIHIVVVKLVMIHREEEGPVINFDGATTLKNFCSWQQTQNDLDDVHPSHHDTAVLITREDICSSKEKCNMLGLSYLGTICDPLQSCFINEEKGLISAFTIAHELGHTLGVQHDDNPRCKEMKVTKYHVMAPALSFHMSPWSWSNCSRKYVTEFLDTGYGECLLDKPDEEIYNLPSELPGSRYDGNKQCELAFGPGSQMCPHINICMHLWCTSTEKLHKGCFTQHVPPADGTDCGPGMHCRHGLCVNKETETRPVNGEWGPWEPYSSCSRTCGGGIESATRRCNRPEPRNGGNYCVGRRMKFRSCNTDSCPKGTQDFREKQCSDFNGKHLDISGIPSNVRWLPRYSGIGTKDRCKLYCQVAGTNYFYLLKDMVEDGTPCGTETHDICVQGQCMAAGCDHVLNSSAKIDKCGVCGGDNSSCKTITGVFNSSHYGYNVVVKIPAGATNVDIRQYSYSGQPDDSYLALSDAEGNFLFNGNFLLSTSKKEINVQGTRTVIEYSGSNNAVERINSTNRQEKEILIEVLCVGNLYNPDVHYSFNIPLEERSDMFTWDPYGPWEGCTKMCQGLQRRNITCIHKSDHSVVSDKECDHLPLPSFVTQSCNTDCELRWHVIGKSECSSQCGQGYRTLDIHCMKYSIHEGQTVQVDDHYCGDQLKPPTQELCHGNCVFTRWHYSEWSQCSRSCGGGERSRESYCMNNFGHRLADNECQELSRVTRENCNEFSCPSWAASEWSECLVTCGKGTKQRQVWCQLNVDHLSDGFCNSSTKPESLSPCELHTCASWQVGPWGPCTTTCGHGYQMRDVKCVNELASAVLEDTECHEASRPSDRQSCVLTPCSFISKLETALLPTVLIKKMAQWRHGSWTPCSVSCGRGTQARYVSCRDALDRIADESYCAHLPRPAEIWDCFTPCGEWQAGDWSPCSASCGHGKTTRQVLCMNYHQPIDENYCDPEVRPLMEQECSLAACPPAHSHFPSSPVQPSYYLSTNLPLTQKLEDNENQVVHPSVRGNQWRTGPWGSCSSSCSGGLQHRAVVCQDENGQSASYCDAASKPPELQQCGPGPCPQWNYGNWGECSQTCGGGIKSRLVICQFPNGQILEDHNCEIVNKPPSVIQCHMHACPADVSWHQEPWTSCSASCGKGRKYREVFCIDQFQRKLEDTNCSQVQKPPTHKACRSVRCPSWKANSWNECSVTCGSGVQQRDVYCRLKGVGQVVEEMCDQSTRPCSQRRCWSQDCVQHKGMERGRLNCSTSCERKDSHQRMECTDNQIRQVNEIVYNSSTISLTSKNCRNPPCNYIVVTADSSQCANNCGFSYRQRITYCTEIPSTKKHKLHRLRPIVYQECPVVPSSQVYQCINSCLHLATWKVGKWSKCSVTCGIGIMKRQVKCITKHGLSSDLCLNHLKPGAQKKCYANDCKSFTTCKEIQVKNHIRKDGDYYLNIKGRIIKIYCADMYLENPKEYLTLVQGEENFSEVYGFRLKNPYQCPFNGSRREDCECDNGHLAAGYTVFSKIRIDLTSMQIKTTDLLFSKTIFGNAVPFATAGDCYSAFRCPQGQFSINLSGTGMKISSTAKWLTQGSYTSVSIRRSEDGTRFFGKCGGYCGKCLPHMTTGLPIQVI.

A signal peptide spans 1–21 (MWVAKWLTGLLYHLSLFITRS). A propeptide spanning residues 22-253 (WEVDFHPRQE…DERRHSRKKR (232 aa)) is cleaved from the precursor. 2 N-linked (GlcNAc...) asparagine glycosylation sites follow: asparagine 92 and asparagine 191. In terms of domain architecture, Peptidase M12B spans 259-467 (RYIEIMVTAD…GYGECLLDKP (209 aa)). 11 disulfide bridges follow: cysteine 334/cysteine 387, cysteine 363/cysteine 369, cysteine 381/cysteine 462, cysteine 419/cysteine 446, cysteine 489/cysteine 511, cysteine 500/cysteine 521, cysteine 506/cysteine 540, cysteine 534/cysteine 545, cysteine 568/cysteine 605, cysteine 572/cysteine 610, and cysteine 583/cysteine 595. Histidine 403 contacts Zn(2+). Glutamate 404 is a catalytic residue. Residues histidine 407 and histidine 413 each coordinate Zn(2+). A glycan (N-linked (GlcNAc...) asparagine) is linked at asparagine 445. A Disintegrin domain is found at 468–555 (DEEIYNLPSE…VNKETETRPV (88 aa)). The region spanning 556–611 (NGEWGPWEPYSSCSRTCGGGIESATRRCNRPEPRNGGNYCVGRRMKFRSCNTDSCP) is the TSP type-1 1 domain. 5 N-linked (GlcNAc...) asparagine glycosylation sites follow: asparagine 702, asparagine 717, asparagine 728, asparagine 809, and asparagine 870. The tract at residues 724–846 (TGVFNSSHYG…FNIPLEERSD (123 aa)) is spacer. 14 consecutive TSP type-1 domains span residues 846 to 904 (DMFT…NTDC), 905 to 961 (ELRW…QELC), 966 to 1023 (VFTR…FSCP), 1024 to 1073 (SWAA…SPCE), 1076 to 1135 (TCAS…TPCS), 1152 to 1206 (KMAQ…DCFT), 1207 to 1264 (PCGE…AACP), 1304 to 1356 (RGNQ…QCGP), 1358 to 1416 (PCPQ…HACP), 1417 to 1475 (ADVS…VRCP), 1476 to 1531 (SWKA…QDCV), 1535 to 1588 (GMER…NPPC), 1589 to 1652 (NYIV…INSC), and 1654 to 1710 (HLAT…NDCK). Asparagine 1061 is a glycosylation site (N-linked (GlcNAc...) asparagine). N-linked (GlcNAc...) asparagine glycosylation is present at asparagine 1456. Asparagine 1542 and asparagine 1572 each carry an N-linked (GlcNAc...) asparagine glycan. A GON domain is found at 1711–1910 (SFTTCKEIQV…MTTGLPIQVI (200 aa)). Residues asparagine 1763, asparagine 1781, and asparagine 1852 are each glycosylated (N-linked (GlcNAc...) asparagine).

Requires Zn(2+) as cofactor. The precursor is cleaved by a furin endopeptidase. In terms of processing, glycosylated. Can be O-fucosylated by POFUT2 on a serine or a threonine residue found within the consensus sequence C1-X(2)-(S/T)-C2-G of the TSP type-1 repeat domains where C1 and C2 are the first and second cysteine residue of the repeat, respectively. Fucosylated repeats can then be further glycosylated by the addition of a beta-1,3-glucose residue by the glucosyltransferase, B3GALTL. Fucosylation mediates the efficient secretion of ADAMTS family members. Can also be C-glycosylated with one or two mannose molecules on tryptophan residues within the consensus sequence W-X-X-W of the TPRs, and N-glycosylated. These other glycosylations can also facilitate secretion. As to expression, very sparingly expressed, although is detected at low levels in testis, prostate, ovary, heart, placenta, lung and pancreas. Overexpressed in several brain, colon and breast carcinomas.

The protein localises to the secreted. It localises to the extracellular space. Its subcellular location is the extracellular matrix. Functionally, may play a role in tissue-remodeling process occurring in both normal and pathological conditions. May have a protease-independent function in the transport from the endoplasmic reticulum to the Golgi apparatus of secretory cargos, mediated by the GON domain. This chain is A disintegrin and metalloproteinase with thrombospondin motifs 20 (ADAMTS20), found in Homo sapiens (Human).